We begin with the raw amino-acid sequence, 206 residues long: MRFTVAIDGPAAAGKGTISRAVAAHFRFAHLDTGLLYRAVGAKVTEGADPVAAAEGLDLADLARGDLRSAEAGQAASRVAALPEVRAALVAFQRSFARREGGAVLDGRDIGTVICPEAEVKLFVTASDEERARRRWLELAAKGGAQSEAEILADLRERDRRDREREAAPLRPAPDALLLDTTELTIDAAVNKAIEAIELRQAQGRE.

Position 9-17 (9-17 (GPAAAGKGT)) interacts with ATP.

This sequence belongs to the cytidylate kinase family. Type 1 subfamily.

The protein localises to the cytoplasm. The enzyme catalyses CMP + ATP = CDP + ADP. It catalyses the reaction dCMP + ATP = dCDP + ADP. The polypeptide is Cytidylate kinase (Cereibacter sphaeroides (strain ATCC 17023 / DSM 158 / JCM 6121 / CCUG 31486 / LMG 2827 / NBRC 12203 / NCIMB 8253 / ATH 2.4.1.) (Rhodobacter sphaeroides)).